The chain runs to 603 residues: Elongation factor 4 (603 aa).

A tr-type G domain is found at 7 to 189 (VRIRNFCIIA…AVVERIPPPP (183 aa)). GTP contacts are provided by residues 19-24 (DHGKST) and 136-139 (NKID).

Belongs to the TRAFAC class translation factor GTPase superfamily. Classic translation factor GTPase family. LepA subfamily.

Its subcellular location is the cell inner membrane. The catalysed reaction is GTP + H2O = GDP + phosphate + H(+). Functionally, required for accurate and efficient protein synthesis under certain stress conditions. May act as a fidelity factor of the translation reaction, by catalyzing a one-codon backward translocation of tRNAs on improperly translocated ribosomes. Back-translocation proceeds from a post-translocation (POST) complex to a pre-translocation (PRE) complex, thus giving elongation factor G a second chance to translocate the tRNAs correctly. Binds to ribosomes in a GTP-dependent manner. This chain is Elongation factor 4, found in Nostoc punctiforme (strain ATCC 29133 / PCC 73102).